The following is a 94-amino-acid chain: Acylphosphatase (94 aa).

In terms of domain architecture, Acylphosphatase-like spans 8-94; that stretch reads HIRAWVSGKV…ETPPLGFEVC (87 aa). Residues Arg23 and Asn41 contribute to the active site.

Belongs to the acylphosphatase family.

It carries out the reaction an acyl phosphate + H2O = a carboxylate + phosphate + H(+). The sequence is that of Acylphosphatase (acyP) from Hahella chejuensis (strain KCTC 2396).